The chain runs to 421 residues: Solute carrier family 35 member F3 (421 aa).

A disordered region spans residues 25–45 (EGEERPRDSPGPAEAQAPAGV). 10 helical membrane-spanning segments follow: residues 66 to 86 (IFWGVAVVLCVCSSWAGSTQL), 98 to 118 (FTLTWFATNWNFLFFPLYYVG), 149 to 169 (VFFTKAAPFGVLWTLTNYLYL), 179 to 199 (DVSVLFCCNKAFVFLLSWIVL), 208 to 228 (IVAAILAIAGIVMMTYADGFH), 232 to 252 (VIGIALVVASASMSALYKVLF), 266 to 286 (LFLSILGVFNILFITCIPIIL), 305 to 325 (LCGFSVLLLTFNIVLNFGIAV), 326 to 346 (TYPTLMSLGIVLSIPVNAVID), and 352 to 372 (IVFNGVRVIAIIIIGLGFLLL). A disordered region spans residues 393–421 (KKEEPAEGAADLSSGPQSKNRRARPSFAR). Positions 411–421 (KNRRARPSFAR) are enriched in basic residues.

It belongs to the SLC35F solute transporter family. Expressed at the highest levels in the adult cerebellum.

Its subcellular location is the membrane. The catalysed reaction is thiamine(in) = thiamine(out). Functionally, mediates thiamine transport. The sequence is that of Solute carrier family 35 member F3 from Homo sapiens (Human).